The primary structure comprises 254 residues: Imidazole glycerol phosphate synthase subunit HisF (254 aa).

Catalysis depends on residues Asp11 and Asp130.

The protein belongs to the HisA/HisF family. In terms of assembly, heterodimer of HisH and HisF.

The protein resides in the cytoplasm. It carries out the reaction 5-[(5-phospho-1-deoxy-D-ribulos-1-ylimino)methylamino]-1-(5-phospho-beta-D-ribosyl)imidazole-4-carboxamide + L-glutamine = D-erythro-1-(imidazol-4-yl)glycerol 3-phosphate + 5-amino-1-(5-phospho-beta-D-ribosyl)imidazole-4-carboxamide + L-glutamate + H(+). It functions in the pathway amino-acid biosynthesis; L-histidine biosynthesis; L-histidine from 5-phospho-alpha-D-ribose 1-diphosphate: step 5/9. In terms of biological role, IGPS catalyzes the conversion of PRFAR and glutamine to IGP, AICAR and glutamate. The HisF subunit catalyzes the cyclization activity that produces IGP and AICAR from PRFAR using the ammonia provided by the HisH subunit. In Trichlorobacter lovleyi (strain ATCC BAA-1151 / DSM 17278 / SZ) (Geobacter lovleyi), this protein is Imidazole glycerol phosphate synthase subunit HisF.